Here is a 284-residue protein sequence, read N- to C-terminus: 4-diphosphocytidyl-2-C-methyl-D-erythritol kinase (284 aa).

Lys-14 is a catalytic residue. 98–108 (PMGGGLGGGSS) serves as a coordination point for ATP. Asp-140 is a catalytic residue.

This sequence belongs to the GHMP kinase family. IspE subfamily.

The enzyme catalyses 4-CDP-2-C-methyl-D-erythritol + ATP = 4-CDP-2-C-methyl-D-erythritol 2-phosphate + ADP + H(+). It participates in isoprenoid biosynthesis; isopentenyl diphosphate biosynthesis via DXP pathway; isopentenyl diphosphate from 1-deoxy-D-xylulose 5-phosphate: step 3/6. Its function is as follows. Catalyzes the phosphorylation of the position 2 hydroxy group of 4-diphosphocytidyl-2C-methyl-D-erythritol. In Shewanella sp. (strain ANA-3), this protein is 4-diphosphocytidyl-2-C-methyl-D-erythritol kinase.